We begin with the raw amino-acid sequence, 251 residues long: Cell division protein ZapD (251 aa).

This sequence belongs to the ZapD family. Interacts with FtsZ.

It localises to the cytoplasm. Its function is as follows. Cell division factor that enhances FtsZ-ring assembly. Directly interacts with FtsZ and promotes bundling of FtsZ protofilaments, with a reduction in FtsZ GTPase activity. The sequence is that of Cell division protein ZapD from Burkholderia multivorans (strain ATCC 17616 / 249).